The primary structure comprises 328 residues: N-acetyl-gamma-glutamyl-phosphate reductase (328 aa).

Residue C143 is part of the active site.

This sequence belongs to the NAGSA dehydrogenase family. Type 1 subfamily.

The protein localises to the cytoplasm. It carries out the reaction N-acetyl-L-glutamate 5-semialdehyde + phosphate + NADP(+) = N-acetyl-L-glutamyl 5-phosphate + NADPH + H(+). The protein operates within amino-acid biosynthesis; L-arginine biosynthesis; N(2)-acetyl-L-ornithine from L-glutamate: step 3/4. In terms of biological role, catalyzes the NADPH-dependent reduction of N-acetyl-5-glutamyl phosphate to yield N-acetyl-L-glutamate 5-semialdehyde. This chain is N-acetyl-gamma-glutamyl-phosphate reductase, found in Methanosphaerula palustris (strain ATCC BAA-1556 / DSM 19958 / E1-9c).